The following is a 635-amino-acid chain: Cationic amino acid transporter 4 (635 aa).

A run of 3 helical transmembrane segments spans residues 42–62, 66–86, and 113–133; these read LTLL…TGTV, MAGP…LLAA, and IWAF…GAAV. Asn-146, Asn-151, and Asn-195 each carry an N-linked (GlcNAc...) asparagine glycan. A helical transmembrane segment spans residues 197–217; sequence TFSAISLIVILFIIVLGFILA. The N-linked (GlcNAc...) asparagine glycan is linked to Asn-221. 5 helical membrane-spanning segments follow: residues 229 to 249, 270 to 290, 318 to 338, 365 to 385, and 391 to 411; these read FAPF…YAFV, MAIA…STVL, GFIV…SNLF, QVPV…ALLL, and VQFL…SIIV. A phosphoserine mark is found at Ser-422 and Ser-427. Helical transmembrane passes span 478-498, 508-528, 539-559, and 567-587; these read VAWA…VLVF, WGYV…LLVL, TFQI…NTCL, and TWLR…GYGI.

This sequence belongs to the amino acid-polyamine-organocation (APC) superfamily. Cationic amino acid transporter (CAT) (TC 2.A.3.3) family.

It is found in the membrane. In terms of biological role, involved in the transport of the cationic amino acids (arginine, lysine and ornithine). This is Cationic amino acid transporter 4 (Slc7a4) from Mus musculus (Mouse).